The sequence spans 253 residues: Protein phosphatase CheZ (253 aa).

A disordered region spans residues 1–84 (MTQEELDALM…EWPPPPPTEE (84 aa)). The segment covering 21 to 69 (LETKEETKEEAKEEAKEEAKEEAKEKEEIKEESSSQKMTVKKEDAEKYG) has biased composition (basic and acidic residues).

Belongs to the CheZ family. As to quaternary structure, interacts with ChePep; this interaction is essential for each other polar localization.

The protein resides in the cytoplasm. In terms of biological role, plays an important role in bacterial chemotaxis signal transduction pathway by accelerating the dephosphorylation of phosphorylated CheY (CheY-P). Also dephosphorylates CheV2 but not CheV1 or CheV3. In addition, forms a distinct chemotaxis regulatory complex with ChePep independently of the core chemotaxis signaling proteins. The polypeptide is Protein phosphatase CheZ (Helicobacter pylori (strain ATCC 700392 / 26695) (Campylobacter pylori)).